The primary structure comprises 475 residues: Probable 5'-adenylylsulfate reductase 1, chloroplastic (475 aa).

The N-terminal 63 residues, 1–63 (MASATASISS…AAEPARQPVS (63 aa)), are a transit peptide targeting the chloroplast. A reductase domain region spans residues 72 to 327 (AAPVAEDAAA…KAKECGLHKG (256 aa)). A Thioredoxin domain is found at 341 to 475 (HKAGGANGNG…SLLAFVNSLR (135 aa)). Catalysis depends on nucleophile residues Cys393 and Cys396. Cys393 and Cys396 are disulfide-bonded.

It belongs to the APS reductase family. It depends on [4Fe-4S] cluster as a cofactor.

It is found in the plastid. It localises to the chloroplast. The catalysed reaction is glutathione disulfide + sulfite + AMP + 2 H(+) = adenosine 5'-phosphosulfate + 2 glutathione. In terms of biological role, reduces sulfate for Cys biosynthesis. This chain is Probable 5'-adenylylsulfate reductase 1, chloroplastic (APR1), found in Oryza sativa subsp. japonica (Rice).